Here is a 363-residue protein sequence, read N- to C-terminus: Aminomethyltransferase (363 aa).

It belongs to the GcvT family. In terms of assembly, the glycine cleavage system is composed of four proteins: P, T, L and H.

The catalysed reaction is N(6)-[(R)-S(8)-aminomethyldihydrolipoyl]-L-lysyl-[protein] + (6S)-5,6,7,8-tetrahydrofolate = N(6)-[(R)-dihydrolipoyl]-L-lysyl-[protein] + (6R)-5,10-methylene-5,6,7,8-tetrahydrofolate + NH4(+). Its function is as follows. The glycine cleavage system catalyzes the degradation of glycine. The protein is Aminomethyltransferase of Picosynechococcus sp. (strain ATCC 27264 / PCC 7002 / PR-6) (Agmenellum quadruplicatum).